Consider the following 305-residue polypeptide: Acyl transferase (305 aa).

Active-site charge relay system residues include Ser116, Asp213, and His243.

It belongs to the LuxD family.

Its pathway is lipid metabolism; fatty acid reduction for biolumincescence. In terms of biological role, acyl transferase is part of the fatty acid reductase system required for aldehyde biosynthesis; it produces fatty acids for the luminescent reaction. The chain is Acyl transferase from Shewanella woodyi (strain ATCC 51908 / MS32).